Here is a 212-residue protein sequence, read N- to C-terminus: 3,4-dihydroxy-2-butanone 4-phosphate synthase (212 aa).

D-ribulose 5-phosphate contacts are provided by residues 37–38 (RE), aspartate 42, 150–154 (RRGHT), and glutamate 174. Glutamate 38 lines the Mg(2+) pocket. A Mg(2+)-binding site is contributed by histidine 153.

The protein belongs to the DHBP synthase family. As to quaternary structure, homodimer. Requires Mg(2+) as cofactor. Mn(2+) serves as cofactor.

The enzyme catalyses D-ribulose 5-phosphate = (2S)-2-hydroxy-3-oxobutyl phosphate + formate + H(+). It participates in cofactor biosynthesis; riboflavin biosynthesis; 2-hydroxy-3-oxobutyl phosphate from D-ribulose 5-phosphate: step 1/1. Its function is as follows. Catalyzes the conversion of D-ribulose 5-phosphate to formate and 3,4-dihydroxy-2-butanone 4-phosphate. The sequence is that of 3,4-dihydroxy-2-butanone 4-phosphate synthase from Shewanella piezotolerans (strain WP3 / JCM 13877).